A 497-amino-acid chain; its full sequence is NAD(P)H-quinone oxidoreductase subunit 2, chloroplastic (497 aa).

The next 14 membrane-spanning stretches (helical) occupy residues 13–33, 37–57, 76–96, 103–123, 129–149, 164–184, 206–226, 240–260, 274–294, 311–331, 332–352, 373–393, 406–426, and 462–482; these read VILP…LDLI, SAWL…ALVF, FTIS…LIST, GMGL…GLFL, LVTV…LVGY, LLMG…LYGL, IAVW…LSAF, PTPV…ALAT, WHVL…LIAA, AGYL…GMIT, YMVT…LFGL, AFCL…AGFF, GLYL…YYYL, and VGIA…NPII.

Belongs to the complex I subunit 2 family. As to quaternary structure, NDH is composed of at least 16 different subunits, 5 of which are encoded in the nucleus.

It localises to the plastid. Its subcellular location is the chloroplast thylakoid membrane. The catalysed reaction is a plastoquinone + NADH + (n+1) H(+)(in) = a plastoquinol + NAD(+) + n H(+)(out). It catalyses the reaction a plastoquinone + NADPH + (n+1) H(+)(in) = a plastoquinol + NADP(+) + n H(+)(out). NDH shuttles electrons from NAD(P)H:plastoquinone, via FMN and iron-sulfur (Fe-S) centers, to quinones in the photosynthetic chain and possibly in a chloroplast respiratory chain. The immediate electron acceptor for the enzyme in this species is believed to be plastoquinone. Couples the redox reaction to proton translocation, and thus conserves the redox energy in a proton gradient. In Zygnema circumcarinatum (Green alga), this protein is NAD(P)H-quinone oxidoreductase subunit 2, chloroplastic.